The primary structure comprises 255 residues: Small ribosomal subunit protein eS1 (255 aa).

Ala2 is modified (N-acetylalanine; partial).

Belongs to the eukaryotic ribosomal protein eS1 family. In terms of assembly, component of the small ribosomal subunit. Mature ribosomes consist of a small (40S) and a large (60S) subunit. The 40S subunit contains about 33 different proteins and 1 molecule of RNA (18S). The 60S subunit contains about 49 different proteins and 3 molecules of RNA (25S, 5.8S and 5S).

It is found in the cytoplasm. The sequence is that of Small ribosomal subunit protein eS1 (rps1) from Pyrenophora tritici-repentis (strain Pt-1C-BFP) (Wheat tan spot fungus).